A 652-amino-acid chain; its full sequence is DNA ligase (652 aa).

NAD(+)-binding positions include 29–33, 78–79, and Glu107; these read DSEYD and SL. Lys109 serves as the catalytic N6-AMP-lysine intermediate. NAD(+) is bound by residues Arg130, Glu164, Lys278, and Lys302. Positions 395, 398, 413, and 418 each coordinate Zn(2+). The 76-residue stretch at 577-652 folds into the BRCT domain; it reads VADAALSGLT…VRDEAWLESL (76 aa).

Belongs to the NAD-dependent DNA ligase family. LigA subfamily. Mg(2+) is required as a cofactor. Mn(2+) serves as cofactor.

The enzyme catalyses NAD(+) + (deoxyribonucleotide)n-3'-hydroxyl + 5'-phospho-(deoxyribonucleotide)m = (deoxyribonucleotide)n+m + AMP + beta-nicotinamide D-nucleotide.. Its function is as follows. DNA ligase that catalyzes the formation of phosphodiester linkages between 5'-phosphoryl and 3'-hydroxyl groups in double-stranded DNA using NAD as a coenzyme and as the energy source for the reaction. It is essential for DNA replication and repair of damaged DNA. The polypeptide is DNA ligase (Streptococcus pneumoniae serotype 4 (strain ATCC BAA-334 / TIGR4)).